The sequence spans 511 residues: Phosphoenolpyruvate carboxylase (511 aa).

It belongs to the PEPCase type 2 family. As to quaternary structure, homotetramer. The cofactor is Mg(2+).

The enzyme catalyses oxaloacetate + phosphate = phosphoenolpyruvate + hydrogencarbonate. Its activity is regulated as follows. Allosterically inhibited by L-aspartate and L-malate. PEPC activity is not affected by allosteric activators of E.coli PEPC such as glucose 6-phosphate, fructose 1,6-bisphosphate, and acetyl coenzyme A. Functionally, catalyzes the irreversible beta-carboxylation of phosphoenolpyruvate (PEP) to form oxaloacetate (OAA), a four-carbon dicarboxylic acid source for the tricarboxylic acid cycle. The protein is Phosphoenolpyruvate carboxylase of Saccharolobus solfataricus (strain ATCC 35092 / DSM 1617 / JCM 11322 / P2) (Sulfolobus solfataricus).